The sequence spans 223 residues: Putative germin-like protein 2-3 (223 aa).

An N-terminal signal peptide occupies residues 1–28; sequence MAAIRASFLLAAAALLALWCSDHGGVVA. An intrachain disulfide couples Cys-38 to Cys-53. The 151-residue stretch at 67 to 217 folds into the Cupin type-1 domain; that stretch reads SGLHMAGNTT…AFQVEKTVVD (151 aa). Asn-74 carries an N-linked (GlcNAc...) asparagine glycan. The Mn(2+) site is built by His-115, His-117, Glu-122, and His-163.

This sequence belongs to the germin family. Oligomer (believed to be a pentamer but probably hexamer).

It localises to the secreted. It is found in the extracellular space. The protein resides in the apoplast. In terms of biological role, may play a role in plant defense. Probably has no oxalate oxidase activity even if the active site is conserved. The sequence is that of Putative germin-like protein 2-3 from Oryza sativa subsp. japonica (Rice).